We begin with the raw amino-acid sequence, 138 residues long: Large-conductance mechanosensitive channel (138 aa).

The next 2 membrane-spanning stretches (helical) occupy residues 19–39 (VGVI…GDVI) and 81–101 (GSFL…FLVI).

Belongs to the MscL family. In terms of assembly, homopentamer.

The protein resides in the cell inner membrane. In terms of biological role, channel that opens in response to stretch forces in the membrane lipid bilayer. May participate in the regulation of osmotic pressure changes within the cell. The sequence is that of Large-conductance mechanosensitive channel from Bradyrhizobium diazoefficiens (strain JCM 10833 / BCRC 13528 / IAM 13628 / NBRC 14792 / USDA 110).